A 62-amino-acid polypeptide reads, in one-letter code: uncharacterized protein (62 aa).

This is an uncharacterized protein from Saccharomyces cerevisiae (strain ATCC 204508 / S288c) (Baker's yeast).